A 127-amino-acid chain; its full sequence is NHP2-like protein 1 homolog (127 aa).

The protein belongs to the eukaryotic ribosomal protein eL8 family.

The protein localises to the nucleus. It is found in the nucleolus. Binds to the 5'-stem-loop of U4 snRNA and may play a role in the late stage of spliceosome assembly. The protein undergoes a conformational change upon RNA-binding. This is NHP2-like protein 1 homolog (hoip) from Drosophila melanogaster (Fruit fly).